Reading from the N-terminus, the 99-residue chain is MVKVKIEFSGGLELLFGNQKQHDVDVPVQEGKQLTAGHLIAWTRDNMLRERPELFVKGHTVRPGILVLINECDWELSGATESTISDGDVVVFISTLHGG.

A 1-thioglycine modification is found at Gly99. Residue Gly99 forms a Glycyl lysine isopeptide (Gly-Lys) (interchain with K-? in acceptor proteins) linkage.

Belongs to the URM1 family. C-terminal thiocarboxylation occurs in 2 steps, it is first acyl-adenylated (-COAMP) via the hesA/moeB/thiF part of the MOCS3 homolog, then thiocarboxylated (-COSH) via the rhodanese domain of the MOCS3 homolog.

It is found in the cytoplasm. It participates in tRNA modification; 5-methoxycarbonylmethyl-2-thiouridine-tRNA biosynthesis. Acts as a sulfur carrier required for 2-thiolation of mcm(5)S(2)U at tRNA wobble positions of cytosolic tRNA(Lys), tRNA(Glu) and tRNA(Gln). Serves as sulfur donor in tRNA 2-thiolation reaction by being thiocarboxylated (-COSH) at its C-terminus by MOCS3. The sulfur is then transferred to tRNA to form 2-thiolation of mcm(5)S(2)U. Also acts as a ubiquitin-like protein (UBL) that is covalently conjugated via an isopeptide bond to lysine residues of target proteins. The thiocarboxylated form serves as substrate for conjugation and oxidative stress specifically induces the formation of UBL-protein conjugates. The protein is Ubiquitin-related modifier 1 homolog of Chlamydomonas reinhardtii (Chlamydomonas smithii).